We begin with the raw amino-acid sequence, 310 residues long: Olfactory receptor 2A7 (310 aa).

The Extracellular portion of the chain corresponds to 1–24 (MGDNITSITEFLLLGFPVGPRIQM). Asn4 is a glycosylation site (N-linked (GlcNAc...) asparagine). Residues 25–48 (LLFGLFSLFYVFTLLGNGTILGLI) form a helical membrane-spanning segment. Residues 49–56 (SLDSRLHA) are Cytoplasmic-facing. A helical transmembrane segment spans residues 57–78 (PMYFFLSHLAVVDIAYACNTVP). At 79 to 99 (RMLVNLLHPAKPISFAGRMMQ) the chain is on the extracellular side. A helical membrane pass occupies residues 100–119 (TFLFSTFAVTECLLLVVMSY). Residues 120–138 (DLYVAICHPLRYLAIMTWR) lie on the Cytoplasmic side of the membrane. The helical transmembrane segment at 139–157 (VCITLAVTSWTTGVLLSLI) threads the bilayer. Residues 158 to 194 (HLVLLLPLPFCRPQKIYHFFCEILAVLKLACADTHIN) are Extracellular-facing. Residues 195–218 (ENMVLAGAISGLVGPLSTIVVSYM) form a helical membrane-spanning segment. Over 219–235 (CILCAILQIQSREVQRK) the chain is Cytoplasmic. Residues 236–258 (AFCTCFSHLCVIGLFYGTAIIMY) form a helical membrane-spanning segment. Over 259-271 (VGPRYGNPKEQKK) the chain is Extracellular. The helical transmembrane segment at 272–291 (YLLLFHSLFNPMLNPLICSL) threads the bilayer. Over 292 to 310 (RNSEVKNTLKRVLGVERAL) the chain is Cytoplasmic.

It belongs to the G-protein coupled receptor 1 family.

The protein resides in the cell membrane. Odorant receptor. The protein is Olfactory receptor 2A7 (OR2A7) of Homo sapiens (Human).